The primary structure comprises 427 residues: UPF0229 protein YeaH (427 aa).

The segment at 87–110 (RIERSQGGGGGSGSGQGQASQDGE) is disordered. A compositionally biased stretch (gly residues) spans 92–102 (QGGGGGSGSGQ).

It belongs to the UPF0229 family.

In Escherichia coli O6:K15:H31 (strain 536 / UPEC), this protein is UPF0229 protein YeaH.